The chain runs to 430 residues: Inner membrane transport protein YbaT (430 aa).

Residues 1-14 lie on the Cytoplasmic side of the membrane; the sequence is MMNTEGNNGNKPLG. A helical membrane pass occupies residues 15-35; that stretch reads LWNVVSIGIGAMVGAGIFALL. The Periplasmic portion of the chain corresponds to 36–38; the sequence is GQA. A helical transmembrane segment spans residues 39 to 59; the sequence is ALLMEASTWVAFAFGGIVAMF. The Cytoplasmic segment spans residues 60 to 88; the sequence is SGYAYARLGASYPSNGGIIDFFRRGLGNG. Residues 89 to 109 traverse the membrane as a helical segment; it reads VFSLALSLLYLLTLAVSIAMV. Residues 110–128 are Periplasmic-facing; that stretch reads ARAFGAYAVQFLHEGSQEE. A helical transmembrane segment spans residues 129–149; it reads HLILLYALGIIAVMTLFNSLS. At 150–157 the chain is on the cytoplasmic side; it reads NHAVGRLE. The chain crosses the membrane as a helical span at residues 158–178; it reads VILVGIKMMILLLLIIAGVWS. The Periplasmic segment spans residues 179-192; it reads LQPAHISVSAPPSS. Residues 193–213 form a helical membrane-spanning segment; sequence GAFFSCIGITFLAYAGFGMMA. Residues 214 to 228 lie on the Cytoplasmic side of the membrane; the sequence is NAADKVKDPQVIMPR. Residues 229–249 form a helical membrane-spanning segment; that stretch reads AFLVAIGVTTLLYISLALVLL. The Periplasmic portion of the chain corresponds to 250–272; it reads SDVSALELEKYADTAVAQAASPL. Residues 273-293 form a helical membrane-spanning segment; sequence LGHVGYVIVVIGALLATASAI. Residues 294-325 lie on the Cytoplasmic side of the membrane; it reads NANLFAVFNIMDNMGSERELPKLMNKSLWRQS. The helical transmembrane segment at 326–346 threads the bilayer; that stretch reads TWGNIIVVVLIMLMTAALNLG. A topological domain (periplasmic) is located at residue serine 347. The chain crosses the membrane as a helical span at residues 348-368; the sequence is LASVASATFLICYLAVFVVAI. At 369–379 the chain is on the cytoplasmic side; the sequence is RLRHDIHASLP. A helical membrane pass occupies residues 380-400; the sequence is ILIVGTLVMLLVIVGFIYSLW. Residues 401–403 lie on the Periplasmic side of the membrane; that stretch reads SQG. The helical transmembrane segment at 404 to 424 threads the bilayer; sequence SRALIWIIGSLLLSLIVAMVM. Topologically, residues 425 to 430 are cytoplasmic; sequence KRNKTV.

Belongs to the amino acid-polyamine-organocation (APC) superfamily.

It localises to the cell inner membrane. Functionally, probable amino-acid or metabolite transport protein. This Escherichia coli (strain K12) protein is Inner membrane transport protein YbaT (ybaT).